Consider the following 312-residue polypeptide: uncharacterized protein (312 aa).

Transmembrane regions (helical) follow at residues alanine 4–glutamate 24 and tyrosine 286–leucine 306.

The protein resides in the cell membrane. This is an uncharacterized protein from Methanocaldococcus jannaschii (strain ATCC 43067 / DSM 2661 / JAL-1 / JCM 10045 / NBRC 100440) (Methanococcus jannaschii).